A 600-amino-acid polypeptide reads, in one-letter code: MTRTPFTLSLRSTDSVFKIRQSLSTVLSHSSTKIISRGYITIPITSTIAYHRPTIRLFNMPIAAPVRTLSSSQPLKRSTSPLPAITPAQNLLRLKAHLQNLPTPLLKHVHLSKIRREDPNLFFSVMRDELTDLAPIVYTPTVGEACQKYSQIYSGPEGLYLNIEDKDRIPEILRQYASKLVTPPQILVVTDGSRILGLGDLGIGGMGISVGKLNLYVAGGGVNPHGCLPVVLDMGTNNETIRNDPLYIGLKQSRVGLEEATEFMDAFMAAASEAFPKAVIQHEDFYSEAAFDFLARYKEKYRMFNDDIEGTGSVILAGFLAAAKQASEASGKPLRDHKVVFLGGGSAAVGVAKEMMNFFMMQGLTEDEARERFWLIDTKGLITSTRADVVSGKIASHKKFFIRNDTEGKEYPSLESVIEYVQPTALVGLSTTFGAFSEFAVRRMAELNQSPIIFPLSNPTSKCELAFSDALEWTDGRVLFASGSPYPPQQFKGTLREPGQGNNFLVFPGIGFGALQAGCKRITTGMITASAIALSEALTPEEKQKGLLYPRLERIRAVSARVAAGVVKQAQEDGVDTNETLRGLDIEALTEEMNKAQWWP.

The transit peptide at 1–68 (MTRTPFTLSL…NMPIAAPVRT (68 aa)) directs the protein to the mitochondrion. Fumarate is bound at residue Arg-93. Tyr-138 acts as the Proton donor in catalysis. Arg-194 provides a ligand contact to (S)-malate. Arg-194 is an NAD(+) binding site. The Proton acceptor role is filled by Lys-212. A divalent metal cation is bound by residues Glu-283, Asp-284, and Asp-307. The NAD(+) site is built by Gly-344 and Ala-347. (S)-malate contacts are provided by Asn-458 and Asn-502.

It belongs to the malic enzymes family. It depends on Mg(2+) as a cofactor. Mn(2+) serves as cofactor.

It is found in the mitochondrion matrix. Its subcellular location is the cytoplasm. It localises to the cytosol. The protein resides in the nucleus. It carries out the reaction (S)-malate + NAD(+) = pyruvate + CO2 + NADH. It catalyses the reaction oxaloacetate + H(+) = pyruvate + CO2. Functionally, NAD-dependent mitochondrial malic enzyme that catalyzes the oxidative decarboxylation of malate to pyruvate. The protein is NAD-dependent malic enzyme, mitochondrial of Cryptococcus neoformans var. grubii serotype A (strain H99 / ATCC 208821 / CBS 10515 / FGSC 9487) (Filobasidiella neoformans var. grubii).